We begin with the raw amino-acid sequence, 309 residues long: Olfactory receptor-like protein OLF4 (309 aa).

Over 1-25 the chain is Extracellular; that stretch reads MELENDTRIPEFLLLGFSEEPKLQP. Asn-5 carries an N-linked (GlcNAc...) asparagine glycan. Residues 26 to 49 form a helical membrane-spanning segment; it reads FLFGLFLSMYLVTILGNLLLILAV. Over 50–57 the chain is Cytoplasmic; the sequence is SSDSHLHT. The chain crosses the membrane as a helical span at residues 58–79; sequence PMYFFLANLSFVDICFTCTTIP. The Extracellular portion of the chain corresponds to 80–100; the sequence is KMLVNIQTQRKVITYESCIIQ. Residues 101–120 form a helical membrane-spanning segment; the sequence is MYFFELFAGIDNFLLTVMAY. Topologically, residues 121 to 139 are cytoplasmic; it reads DRYMAICYPLHYMVIMNPQ. Residues 140–158 traverse the membrane as a helical segment; the sequence is LCSLLLLVSWIMSALHSLL. At 159–196 the chain is on the extracellular side; the sequence is QTLMVLRLSFCTHFQIPHFFCELNQMIQLACSDTFLNN. A helical transmembrane segment spans residues 197–219; it reads MMLYFAAILLGVAPLVGVLYSYF. Residues 220 to 236 lie on the Cytoplasmic side of the membrane; the sequence is KIVSSIRGISSAHSKYK. Residues 237 to 260 traverse the membrane as a helical segment; that stretch reads AFSTCASHLSVVSLFYCTSLGVYL. At 261 to 272 the chain is on the extracellular side; it reads SSAAPQSTHTSS. A helical transmembrane segment spans residues 273–292; sequence VASVMYTVVTPMLNPFIYSL. Topologically, residues 293-309 are cytoplasmic; sequence RNKDIKGALNVFFRGKP.

It belongs to the G-protein coupled receptor 1 family.

The protein resides in the cell membrane. In terms of biological role, putative odorant or sperm cell receptor. The protein is Olfactory receptor-like protein OLF4 of Canis lupus familiaris (Dog).